Here is a 295-residue protein sequence, read N- to C-terminus: SPX domain-containing protein 1 (295 aa).

The SPX domain occupies M1–Q166. The tract at residues N197–G227 is disordered. The span at E204 to P216 shows a compositional bias: basic and acidic residues.

In terms of assembly, interacts (via SPX domain) with PHR2 (via C-terminus). Interacts with RLI1 in the nucleus to prevents its positive regulation of leaf inclination during phosphate (Pi) starvation.

Its subcellular location is the nucleus. In terms of biological role, involved in plant adaptation to phosphate (Pi) starvation. Inhibits PHR2 DNA-binding activity via a Pi-dependent protein interaction. Suppresses the regulation on expression of PT2 by PHR2 and accumulation of shoot Pi. Optimizes growth under phosphate-limited conditions through a negative feedback loop of the PSI (phosphate starvation-induced) signaling pathway. Regulates the expression of SPX2, SPX3 and SPX5. May be an important link between signal transduction pathways related to phosphate starvation and cold stress. Together with SPX2, plays a negative role in the regulation of leaf inclination by preventing RLI1 transcription factor activity in Pi depleted conditions. The chain is SPX domain-containing protein 1 from Oryza sativa subsp. indica (Rice).